Here is an 83-residue protein sequence, read N- to C-terminus: Prolactin-releasing peptide (83 aa).

A signal peptide spans 1 to 21; the sequence is MALKTWLLCLLLLSLVLPGAS. Residue Phe52 is modified to Phenylalanine amide. A propeptide spanning residues 57–83 is cleaved from the precursor; sequence ATPRDVTGLGQLSCLPLDGRTKFSQRG.

In terms of tissue distribution, widely expressed, with highest levels in medulla oblongata and hypothalamus.

The protein localises to the secreted. Stimulates prolactin (PRL) release and regulates the expression of prolactin through its receptor GPR10. May stimulate lactotrophs directly to secrete PRL. The chain is Prolactin-releasing peptide (Prlh) from Rattus norvegicus (Rat).